The chain runs to 199 residues: Probable cobalt-precorrin-6B C(15)-methyltransferase (decarboxylating) (199 aa).

S-adenosyl-L-methionine-binding positions include threonine 24, 48–52 (GCGTG), aspartate 72, and alanine 101.

This sequence belongs to the methyltransferase superfamily. Archaeal-type CbiT family.

It carries out the reaction Co-precorrin-6B + S-adenosyl-L-methionine = Co-precorrin-7 + S-adenosyl-L-homocysteine + CO2. The protein operates within cofactor biosynthesis; adenosylcobalamin biosynthesis; cob(II)yrinate a,c-diamide from sirohydrochlorin (anaerobic route): step 8/10. Functionally, catalyzes the methylation of C-15 in cobalt-precorrin-6B followed by the decarboxylation of C-12 to form cobalt-precorrin-7. This Saccharolobus islandicus (strain L.S.2.15 / Lassen #1) (Sulfolobus islandicus) protein is Probable cobalt-precorrin-6B C(15)-methyltransferase (decarboxylating).